A 490-amino-acid polypeptide reads, in one-letter code: Mitochondria-eating protein (490 aa).

Residues 112 to 210 (IRELSSVHES…RILRDEVSFL (99 aa)) are a coiled coil. Low complexity-rich tracts occupy residues 224-241 (SRSP…SPVR) and 456-490 (RSSS…SSRL). Disordered regions lie at residues 224–253 (SRSP…LTSS) and 455–490 (SRSS…SSRL).

It belongs to the MIEAP family.

Its subcellular location is the cytoplasm. The protein localises to the mitochondrion outer membrane. It is found in the mitochondrion matrix. Its function is as follows. Key regulator of mitochondrial quality that mediates the repairing or degradation of unhealthy mitochondria in response to mitochondrial damage. Mediator of mitochondrial protein catabolic process (also named MALM) by mediating the degradation of damaged proteins inside mitochondria by promoting the accumulation in the mitochondrial matrix of hydrolases that are characteristic of the lysosomal lumen. Also involved in mitochondrion degradation of damaged mitochondria by promoting the formation of vacuole-like structures (named MIV), which engulf and degrade unhealthy mitochondria by accumulating lysosomes. Binds cardiolipin. May form molecular condensates (non-membrane-bounded organelles) within mitochondria that compartmentalize and promote cardiolipin metabolism. The chain is Mitochondria-eating protein (spata18) from Danio rerio (Zebrafish).